A 141-amino-acid polypeptide reads, in one-letter code: Large ribosomal subunit protein uL11 (141 aa).

Belongs to the universal ribosomal protein uL11 family. In terms of assembly, part of the ribosomal stalk of the 50S ribosomal subunit. Interacts with L10 and the large rRNA to form the base of the stalk. L10 forms an elongated spine to which L12 dimers bind in a sequential fashion forming a multimeric L10(L12)X complex. Post-translationally, one or more lysine residues are methylated.

Forms part of the ribosomal stalk which helps the ribosome interact with GTP-bound translation factors. The polypeptide is Large ribosomal subunit protein uL11 (Lactobacillus delbrueckii subsp. bulgaricus (strain ATCC 11842 / DSM 20081 / BCRC 10696 / JCM 1002 / NBRC 13953 / NCIMB 11778 / NCTC 12712 / WDCM 00102 / Lb 14)).